A 311-amino-acid polypeptide reads, in one-letter code: MKKKSLLPLGLAIGLASLAASPLIQASTYTQTKYPIVLAHGMLGFDNILGVDYWFGIPSALRRDGAQVYVTEVSQLDTSEVRGEQLLQQVEEIVALSGQPKVNLIGHSHGGPTIRYVAAVRPDLMPSATSVGAPHKGSDTADFLRQIPPGSAGEAVLSGLVNSLGALISFLSSGSAGTQNSLGSLESLNSEGAARFNAKYPQGIPTSACGEGAYKVNGVSYYSWSGSSPLTNFLDPSDAFLGASSLTFKNGTANDGLVGTCSSHLGMVIRDNYRMNHLDEVNQVFGLTSLFETSPVSVYRQHANRLKNASL.

A signal peptide spans 1 to 26 (MKKKSLLPLGLAIGLASLAASPLIQA). The 246-residue stretch at 35 to 280 (PIVLAHGMLG…DNYRMNHLDE (246 aa)) folds into the AB hydrolase-1 domain. Residue Met-42 participates in substrate binding. Ser-108 (nucleophile) is an active-site residue. His-109 serves as a coordination point for substrate. A disulfide bond links Cys-209 and Cys-261. Asp-235 contributes to the Ca(2+) binding site. Residues Asp-255 and His-277 each act as charge relay system in the active site. The Ca(2+) site is built by Asp-279, Gln-283, and Leu-287.

This sequence belongs to the AB hydrolase superfamily. Pseudomonas lipase family. Monomer. Ca(2+) is required as a cofactor.

It is found in the secreted. The catalysed reaction is a triacylglycerol + H2O = a diacylglycerol + a fatty acid + H(+). Functionally, catalyzes the hydrolysis of triacylglycerol. Also able to catalyze, in anhydrous organic solvents, intramolecular transesterification of omega-hydroxyfatty acid esters to form macrocyclic lactones. This biosynthesis is dependent on the chain length of the substrates, and the formation of monomer lactone is maximum with methyl 18-hydroxyoctadecanoate. With shorter substrates, monomer lactone decreases and the formation of diolide (dimer lactone) increases. In Pseudomonas sp. (strain 109), this protein is Triacylglycerol lipase.